The following is a 374-amino-acid chain: 5-aminosalicylate 1,2-dioxygenase (374 aa).

Belongs to the gentisate 1,2-dioxygenase family. Fe(2+) is required as a cofactor.

The enzyme catalyses 5-amino-2-hydroxybenzoate + O2 = (2Z,4E)-4-amino-6-oxohepta-2,4-dienedioate + H(+). Inhibited by SDS and o-phenanthroline, a ferrous iron chelator. Partially inhibited by EDTA. Its function is as follows. Involved in the biodegradation of 3-aminobenzoate. Catalyzes the cleavage of the 5-aminosalicylate (5ASA) aromatic ring to form 4-amino-6-oxohepta-2,4-dienedioate (cis-ACOHDA). Can also convert gentisate, but the catalytic efficiency with 5ASA is 70-fold higher. This is 5-aminosalicylate 1,2-dioxygenase from Comamonas sp.